The following is a 206-amino-acid chain: Histidine biosynthesis bifunctional protein HisIE (206 aa).

Residues 1-117 (MGSNEVATGD…SCFPSAPGQF (117 aa)) form a phosphoribosyl-AMP cyclohydrolase region. Positions 118-206 (LGSLDALVAE…AAALLESRHQ (89 aa)) are phosphoribosyl-ATP pyrophosphohydrolase.

It in the N-terminal section; belongs to the PRA-CH family. In the C-terminal section; belongs to the PRA-PH family.

The protein resides in the cytoplasm. It catalyses the reaction 1-(5-phospho-beta-D-ribosyl)-ATP + H2O = 1-(5-phospho-beta-D-ribosyl)-5'-AMP + diphosphate + H(+). It carries out the reaction 1-(5-phospho-beta-D-ribosyl)-5'-AMP + H2O = 1-(5-phospho-beta-D-ribosyl)-5-[(5-phospho-beta-D-ribosylamino)methylideneamino]imidazole-4-carboxamide. It functions in the pathway amino-acid biosynthesis; L-histidine biosynthesis; L-histidine from 5-phospho-alpha-D-ribose 1-diphosphate: step 2/9. It participates in amino-acid biosynthesis; L-histidine biosynthesis; L-histidine from 5-phospho-alpha-D-ribose 1-diphosphate: step 3/9. The protein is Histidine biosynthesis bifunctional protein HisIE of Xanthomonas axonopodis pv. citri (strain 306).